A 142-amino-acid chain; its full sequence is Large ribosomal subunit protein uL11 (142 aa).

Belongs to the universal ribosomal protein uL11 family. Part of the ribosomal stalk of the 50S ribosomal subunit. Interacts with L10 and the large rRNA to form the base of the stalk. L10 forms an elongated spine to which L12 dimers bind in a sequential fashion forming a multimeric L10(L12)X complex. One or more lysine residues are methylated.

Functionally, forms part of the ribosomal stalk which helps the ribosome interact with GTP-bound translation factors. The polypeptide is Large ribosomal subunit protein uL11 (Mycolicibacterium vanbaalenii (strain DSM 7251 / JCM 13017 / BCRC 16820 / KCTC 9966 / NRRL B-24157 / PYR-1) (Mycobacterium vanbaalenii)).